We begin with the raw amino-acid sequence, 553 residues long: 2-succinyl-5-enolpyruvyl-6-hydroxy-3-cyclohexene-1-carboxylate synthase (553 aa).

It belongs to the TPP enzyme family. MenD subfamily. In terms of assembly, homodimer. Mg(2+) is required as a cofactor. The cofactor is Mn(2+). Thiamine diphosphate serves as cofactor.

It carries out the reaction isochorismate + 2-oxoglutarate + H(+) = 5-enolpyruvoyl-6-hydroxy-2-succinyl-cyclohex-3-ene-1-carboxylate + CO2. Its pathway is quinol/quinone metabolism; 1,4-dihydroxy-2-naphthoate biosynthesis; 1,4-dihydroxy-2-naphthoate from chorismate: step 2/7. It functions in the pathway quinol/quinone metabolism; menaquinone biosynthesis. In terms of biological role, catalyzes the thiamine diphosphate-dependent decarboxylation of 2-oxoglutarate and the subsequent addition of the resulting succinic semialdehyde-thiamine pyrophosphate anion to isochorismate to yield 2-succinyl-5-enolpyruvyl-6-hydroxy-3-cyclohexene-1-carboxylate (SEPHCHC). The protein is 2-succinyl-5-enolpyruvyl-6-hydroxy-3-cyclohexene-1-carboxylate synthase of Thermobifida fusca (strain YX).